A 396-amino-acid polypeptide reads, in one-letter code: S-adenosylmethionine synthase (396 aa).

Residue His-16 participates in ATP binding. Asp-18 contributes to the Mg(2+) binding site. A K(+)-binding site is contributed by Glu-44. L-methionine contacts are provided by Glu-57 and Gln-100. Residues 100-110 form a flexible loop region; the sequence is QSPDINQGVDR. ATP-binding positions include 165 to 167, Asp-240, 246 to 247, Ala-263, and Lys-267; these read DAK and RK. Asp-240 lines the L-methionine pocket. Residue Lys-271 coordinates L-methionine.

It belongs to the AdoMet synthase family. As to quaternary structure, homotetramer; dimer of dimers. Mg(2+) serves as cofactor. Requires K(+) as cofactor.

It localises to the cytoplasm. It carries out the reaction L-methionine + ATP + H2O = S-adenosyl-L-methionine + phosphate + diphosphate. The protein operates within amino-acid biosynthesis; S-adenosyl-L-methionine biosynthesis; S-adenosyl-L-methionine from L-methionine: step 1/1. Its function is as follows. Catalyzes the formation of S-adenosylmethionine (AdoMet) from methionine and ATP. The overall synthetic reaction is composed of two sequential steps, AdoMet formation and the subsequent tripolyphosphate hydrolysis which occurs prior to release of AdoMet from the enzyme. The chain is S-adenosylmethionine synthase from Pseudomonas fluorescens (strain ATCC BAA-477 / NRRL B-23932 / Pf-5).